The following is a 166-amino-acid chain: NADH-quinone oxidoreductase subunit I (166 aa).

4Fe-4S ferredoxin-type domains lie at 57-87 (LRRYPNGEERCIACKLCEAVCPALAITIESE) and 97-126 (TRYDIDMFKCINCGLCEESCPVDSIVVTPI). [4Fe-4S] cluster is bound by residues Cys67, Cys70, Cys73, Cys77, Cys106, Cys109, Cys112, and Cys116.

It belongs to the complex I 23 kDa subunit family. NDH-1 is composed of 14 different subunits. Subunits NuoA, H, J, K, L, M, N constitute the membrane sector of the complex. [4Fe-4S] cluster is required as a cofactor.

The protein localises to the cell inner membrane. It catalyses the reaction a quinone + NADH + 5 H(+)(in) = a quinol + NAD(+) + 4 H(+)(out). Functionally, NDH-1 shuttles electrons from NADH, via FMN and iron-sulfur (Fe-S) centers, to quinones in the respiratory chain. The immediate electron acceptor for the enzyme in this species is believed to be ubiquinone. Couples the redox reaction to proton translocation (for every two electrons transferred, four hydrogen ions are translocated across the cytoplasmic membrane), and thus conserves the redox energy in a proton gradient. The chain is NADH-quinone oxidoreductase subunit I from Legionella pneumophila (strain Paris).